Here is a 938-residue protein sequence, read N- to C-terminus: MDCTNLQFESILNLLKTDVSDNTFLTITAKIEIFSLAAESITADKILSFAKLLPIHNYHFNFIKNHMVFYILNYSTLGFAKRFSIAETLCRELKIFHRTFQSTSKLQNLNNAEVLYQFEKLIESIQVFKAELASPIGKLLRQETMIYDKPTEKSVKYVIIQQNLIKINNLIQDCESIKNCRLIAELIDELYQKVYRWFMQIFTYDDIIFPNDNFLDRLLKMDFCYTYYTASNQHLLSLFEQTIDNQIFIDPSPYFEINPVYSPELQFMSTFSLKIFSKNISAKNEDLYIYPLLKTNFSILTFLSLENIFFHHGFIYHILHRTNITPTEEKKLGKINGFLNTVIQQVLIKKNNLQITFPELLDKIYHLHRIGLNIETAQIFLQMLTTYKPATTNNKLQTFFTNFSIIIFSAYIFFLCIELFSPTFIFHNKKKLILEKQKSIILILGEQFSFIWKEVNEIVDLLFSSTVTETYFKFYSKGADDYEKDFLYKDLMEKWGELFFPLTYSMTTPQKYTDKHVSSTVLKNLCDTAYQSKMETAYESLLPYITHPEFKFIFITHYVRPSLSLITNLTFEEIKDNRRLLILIFACKLLMPSNYLLSHYLLLLHAFTLQIFKVDLGHFSIIHAITQKIFDNINSLTQTIFIPKTNFLVSLLLTAYTVHMQTYVNPWIQKTISENIALLKEYIDFTKKCSSTLATTCYLNLENFAVNMYFGKNKVGSTSLSAFYRTCSKLIEESKLFKDRLQEIKVSKTLFIEMLQNVVKNITKFKDLVSNQTLQNFIIIVERISSHANTTYQDVLNSIDECHFSNMQLIQSFKNIVYVIDVLNTKNIFNFSLASQLIEAKKLVKKQDTYNQLNVQDDFVTVLKSHLNNLFEKQKPTINIERRFMLEGIPDIKQIPFLDVFDERYRLIPQIEKYLHWYIAYSEAAQADLVEPLLLKLG.

The segment at 457-938 is interaction with large tegument protein; the sequence is EIVDLLFSST…LVEPLLLKLG (482 aa).

Belongs to the herpesviridae inner tegument protein family. As to quaternary structure, interacts (via C-terminus) with the large tegument protein/LTP (via N-terminus).

The protein localises to the virion tegument. The protein resides in the host cytoplasm. Its subcellular location is the host nucleus. It is found in the host Golgi apparatus. It localises to the host trans-Golgi network. Plays an essential role in cytoplasmic secondary envelopment during viral egress. Interacts with the capsid via the large tegument protein/LTP and participates in its transport to the host trans-Golgi network (TGN) where secondary envelopment occurs. Modulates tegumentation and capsid accumulation at the viral assembly complex. The polypeptide is Inner tegument protein (U30) (Human herpesvirus 7 (strain JI) (HHV-7)).